The following is an 887-amino-acid chain: Tiger protein O1 (887 aa).

The first 21 residues, 1 to 21, serve as a signal peptide directing secretion; the sequence is MEKKLLIIVIVFLFSTIQVFC. Residues 22-845 are Extracellular-facing; that stretch reads RIDDKTFVIS…SLSKKSIILL (824 aa). 24 N-linked (GlcNAc...) asparagine glycosylation sites follow: Asn-32, Asn-70, Asn-186, Asn-207, Asn-219, Asn-259, Asn-297, Asn-314, Asn-325, Asn-338, Asn-354, Asn-393, Asn-431, Asn-588, Asn-629, Asn-652, Asn-687, Asn-710, Asn-720, Asn-730, Asn-775, Asn-788, Asn-811, and Asn-816. Positions 277-365 constitute an IPT/TIG 1 domain; that stretch reads NSVPYSKGGL…TNENKLLFNY (89 aa). The IPT/TIG 2 domain occupies 710 to 767; it reads NTSSINVNGGNLTIYGKNFYNVSNIKVEVDNQLKCNKIEFINLNSLTCFLPPFIETLF. The interval 811 to 835 is disordered; the sequence is NDTSENSTNDILNHEKNNNNQKDGS. Residues 846 to 866 form a helical membrane-spanning segment; that stretch reads SILLPSFIILIVSLAIVILVI. Over 867–887 the chain is Cytoplasmic; that stretch reads KRNKTKHSKNMSSKEKELMKQ.

Its subcellular location is the membrane. The sequence is that of Tiger protein O1 (tgrO1) from Dictyostelium discoideum (Social amoeba).